The primary structure comprises 194 residues: 7-methyl-GTP pyrophosphatase (194 aa).

Catalysis depends on Asp-70, which acts as the Proton acceptor.

Belongs to the Maf family. YceF subfamily. The cofactor is a divalent metal cation.

It localises to the cytoplasm. The enzyme catalyses N(7)-methyl-GTP + H2O = N(7)-methyl-GMP + diphosphate + H(+). In terms of biological role, nucleoside triphosphate pyrophosphatase that hydrolyzes 7-methyl-GTP (m(7)GTP). May have a dual role in cell division arrest and in preventing the incorporation of modified nucleotides into cellular nucleic acids. The protein is 7-methyl-GTP pyrophosphatase of Vibrio vulnificus (strain CMCP6).